A 65-amino-acid chain; its full sequence is uncharacterized protein (65 aa).

To E.coli YjiX.

This is an uncharacterized protein from Escherichia coli O6:H1 (strain CFT073 / ATCC 700928 / UPEC).